The chain runs to 330 residues: 2-keto-3-deoxygluconate permease (330 aa).

Helical transmembrane passes span 10 to 30 (VPGGMMIIPLFLGAALNTFAP), 42 to 62 (ALITGTLPILGVFIFCVGATI), 77 to 97 (LLLGKIGFAALLGVIAAQFIP), 100 to 120 (GIQSGFFAGLSVLAIVAVMNE), 140 to 160 (GAFAFISTESGPFMTMVTFGV), 163 to 183 (LAAFPWETLAATVIPFLLGCI), 200 to 220 (PAIIPFFAFSLGNTLNFGMLI), 224 to 244 (LLGIFIGVSVVILSGSSLFLL), 254 to 274 (VAGVAASSTAGAAVAVPYALA), and 289 to 309 (AIIATSVIVTSLLTPLATVWV).

Belongs to the KdgT transporter family.

It is found in the cell membrane. The catalysed reaction is 2-dehydro-3-deoxy-D-gluconate(in) + H(+)(in) = 2-dehydro-3-deoxy-D-gluconate(out) + H(+)(out). In terms of biological role, catalyzes the proton-dependent uptake of 2-keto-3-deoxygluconate (KDG) into the cell. The sequence is that of 2-keto-3-deoxygluconate permease from Bacillus subtilis (strain 168).